The primary structure comprises 336 residues: HTH-type transcriptional repressor PurR (336 aa).

The region spanning 2–56 is the HTH lacI-type domain; sequence ATIKDVAKMAGVSTTTVSHVINKTRFVAKDTEEAVLSAIKQLNYSPSAVARSLKV. A DNA-binding region (H-T-H motif) is located at residues 4-23; sequence IKDVAKMAGVSTTTVSHVIN. The DNA-binding element occupies 48 to 56; it reads SAVARSLKV. Residues Tyr73, Lys188, Thr190, Phe219, and Asp273 each coordinate hypoxanthine.

As to quaternary structure, homodimer.

Its pathway is purine metabolism; purine nucleotide biosynthesis [regulation]. Is the main repressor of the genes involved in the de novo synthesis of purine nucleotides, regulating purB, purC, purEK, purF, purHD, purL, purMN and guaBA expression. PurR is allosterically activated to bind its cognate DNA by binding the purine corepressors, hypoxanthine or guanine, thereby effecting transcription repression. This is HTH-type transcriptional repressor PurR from Haemophilus influenzae (strain ATCC 51907 / DSM 11121 / KW20 / Rd).